The primary structure comprises 595 residues: Putative capsid protein V20 (595 aa).

The protein resides in the virion. Functionally, may self assemble to form an icosahedral capsid. Most abundant protein in the virion. This is Putative capsid protein V20 from Sputnik virophage.